Consider the following 402-residue polypeptide: Acetate kinase (402 aa).

Asn7 provides a ligand contact to Mg(2+). Lys14 is an ATP binding site. Arg95 contacts substrate. Asp152 (proton donor/acceptor) is an active-site residue. ATP contacts are provided by residues 212–216, 286–288, and 334–338; these read HLGNG, DMR, and GIGEN. A Mg(2+)-binding site is contributed by Glu388.

This sequence belongs to the acetokinase family. Homodimer. Requires Mg(2+) as cofactor. It depends on Mn(2+) as a cofactor.

The protein resides in the cytoplasm. It catalyses the reaction acetate + ATP = acetyl phosphate + ADP. Its pathway is metabolic intermediate biosynthesis; acetyl-CoA biosynthesis; acetyl-CoA from acetate: step 1/2. In terms of biological role, catalyzes the formation of acetyl phosphate from acetate and ATP. Can also catalyze the reverse reaction. In Oleidesulfovibrio alaskensis (strain ATCC BAA-1058 / DSM 17464 / G20) (Desulfovibrio alaskensis), this protein is Acetate kinase.